The chain runs to 100 residues: Small ribosomal subunit protein uS14c (100 aa).

Belongs to the universal ribosomal protein uS14 family. As to quaternary structure, part of the 30S ribosomal subunit.

It localises to the plastid. The protein resides in the chloroplast. Functionally, binds 16S rRNA, required for the assembly of 30S particles. The protein is Small ribosomal subunit protein uS14c of Stigeoclonium helveticum (Green alga).